A 156-amino-acid polypeptide reads, in one-letter code: Small ribosomal subunit protein uS7c (156 aa).

This sequence belongs to the universal ribosomal protein uS7 family. Part of the 30S ribosomal subunit.

Its subcellular location is the plastid. It localises to the chloroplast. One of the primary rRNA binding proteins, it binds directly to 16S rRNA where it nucleates assembly of the head domain of the 30S subunit. The chain is Small ribosomal subunit protein uS7c (rps7) from Chlorokybus atmophyticus (Soil alga).